The sequence spans 484 residues: Sushi domain-containing protein 4 (484 aa).

A signal peptide spans 1–35; that stretch reads MFHHADKGGKKSAFGHPVCGQIILSIILLRPPLLV. Sushi domains are found at residues 46 to 110, 111 to 168, 169 to 230, and 232 to 295; these read QICK…VCLS, EDCL…QPTC, QGCL…RCLD, and EACS…YCVK. Intrachain disulfides connect cysteine 48-cysteine 90, cysteine 76-cysteine 108, cysteine 113-cysteine 156, cysteine 138-cysteine 168, cysteine 171-cysteine 215, cysteine 201-cysteine 228, cysteine 234-cysteine 280, and cysteine 265-cysteine 293. N-linked (GlcNAc...) asparagine glycans are attached at residues asparagine 95 and asparagine 125. An N-linked (GlcNAc...) asparagine glycan is attached at asparagine 183. A helical membrane pass occupies residues 311–331; the sequence is WKVVACTATSVLLALLLVITA. A disordered region spans residues 374–484; the sequence is SGNYCQPPND…PLVEDGEEDC (111 aa). Composition is skewed to polar residues over residues 424–442 and 449–467; these read DSLS…SSSH and SEKT…TSPS. Acidic residues predominate over residues 470–484; sequence IADEIPLVEDGEEDC.

It is found in the membrane. This is Sushi domain-containing protein 4 (susd4) from Danio rerio (Zebrafish).